The chain runs to 313 residues: Ribosomal RNA small subunit methyltransferase H (313 aa).

S-adenosyl-L-methionine contacts are provided by residues 35-37, aspartate 55, phenylalanine 79, aspartate 101, and glutamine 108; that span reads GGH.

The protein belongs to the methyltransferase superfamily. RsmH family.

The protein resides in the cytoplasm. The enzyme catalyses cytidine(1402) in 16S rRNA + S-adenosyl-L-methionine = N(4)-methylcytidine(1402) in 16S rRNA + S-adenosyl-L-homocysteine + H(+). Its function is as follows. Specifically methylates the N4 position of cytidine in position 1402 (C1402) of 16S rRNA. In Escherichia coli O127:H6 (strain E2348/69 / EPEC), this protein is Ribosomal RNA small subunit methyltransferase H.